A 117-amino-acid polypeptide reads, in one-letter code: Immunoglobulin lambda variable 1-44 (117 aa).

The first 19 residues, 1–19, serve as a signal peptide directing secretion; sequence MASFPLLLTLLTHCAGSWA. Pyrrolidone carboxylic acid is present on Gln-20. The framework-1 stretch occupies residues 20 to 44; it reads QSVLTQPPSASGTPGQRVTISCSGS. The 98-residue stretch at 20–117 folds into the Ig-like domain; the sequence is QSVLTQPPSA…CAAWDDSLNG (98 aa). The segment covering 24-35 has biased composition (polar residues); the sequence is TQPPSASGTPGQ. The segment at 24–45 is disordered; it reads TQPPSASGTPGQRVTISCSGSS. A disulfide bond links Cys-41 and Cys-108. Positions 45-52 are complementarity-determining-1; it reads SSNIGSNT. The segment at 53–69 is framework-2; the sequence is VNWYQQLPGTAPKLLIY. The tract at residues 70–72 is complementarity-determining-2; the sequence is SNN. Positions 73–108 are framework-3; the sequence is QRPSGVPDRFSGSKSGTSASLAISGLQSEDEADYYC. Residues 109 to 117 form a complementarity-determining-3 region; that stretch reads AAWDDSLNG.

As to quaternary structure, immunoglobulins are composed of two identical heavy chains and two identical light chains; disulfide-linked.

The protein resides in the secreted. Its subcellular location is the cell membrane. Functionally, v region of the variable domain of immunoglobulin light chains that participates in the antigen recognition. Immunoglobulins, also known as antibodies, are membrane-bound or secreted glycoproteins produced by B lymphocytes. In the recognition phase of humoral immunity, the membrane-bound immunoglobulins serve as receptors which, upon binding of a specific antigen, trigger the clonal expansion and differentiation of B lymphocytes into immunoglobulins-secreting plasma cells. Secreted immunoglobulins mediate the effector phase of humoral immunity, which results in the elimination of bound antigens. The antigen binding site is formed by the variable domain of one heavy chain, together with that of its associated light chain. Thus, each immunoglobulin has two antigen binding sites with remarkable affinity for a particular antigen. The variable domains are assembled by a process called V-(D)-J rearrangement and can then be subjected to somatic hypermutations which, after exposure to antigen and selection, allow affinity maturation for a particular antigen. In Homo sapiens (Human), this protein is Immunoglobulin lambda variable 1-44.